The sequence spans 626 residues: Miltiradiene synthase KSL1, chloroplastic (626 aa).

The transit peptide at 1-51 (MSLAFNLRVIPFSGHTIQSRRGLFPVHESPMITTKPFAAVKCSLTTSTDLM) directs the protein to the chloroplast. Mg(2+) is bound by residues D329, D333, N473, and E481. A DDXXD motif motif is present at residues 329–333 (DDFFD).

The protein belongs to the terpene synthase family. Mg(2+) serves as cofactor. As to expression, highly expressed in roots, and, at low levels, in stems and leaves.

It is found in the plastid. Its subcellular location is the chloroplast. The enzyme catalyses (+)-copalyl diphosphate = miltiradiene + diphosphate. Its pathway is secondary metabolite biosynthesis; terpenoid biosynthesis. Functionally, involved in the biosynthesis of ent-kaurene diterpenoids natural products such as oridonin, miltiradiene, eriocalyxin B and nezukol, known to exhibit antitumor, anti-inflammatory and antibacterial activities. Catalyzes the conversion of (+)-copalyl diphosphate ((+)-CPP) to miltiradiene. The polypeptide is Miltiradiene synthase KSL1, chloroplastic (Isodon rubescens (Rabdosia rubescens)).